Consider the following 228-residue polypeptide: ATP synthase subunit a 2 (228 aa).

6 helical membrane-spanning segments follow: residues 16–36 (VGTT…GAWL), 74–94 (VFPF…SSLI), 103–123 (DLSA…WFGI), 139–159 (SPFL…ALAV), 173–193 (LLVL…LHIV), and 194–214 (EALV…AGAI).

The protein belongs to the ATPase A chain family. As to quaternary structure, F-type ATPases have 2 components, CF(1) - the catalytic core - and CF(0) - the membrane proton channel. CF(1) has five subunits: alpha(3), beta(3), gamma(1), delta(1), epsilon(1). CF(0) has three main subunits: a(1), b(2) and c(9-12). The alpha and beta chains form an alternating ring which encloses part of the gamma chain. CF(1) is attached to CF(0) by a central stalk formed by the gamma and epsilon chains, while a peripheral stalk is formed by the delta and b chains.

Its subcellular location is the cell inner membrane. Key component of the proton channel; it plays a direct role in the translocation of protons across the membrane. This is ATP synthase subunit a 2 from Pelobacter propionicus (strain DSM 2379 / NBRC 103807 / OttBd1).